The chain runs to 155 residues: Large ribosomal subunit protein eL19 (155 aa).

A compositionally biased stretch (basic residues) spans 66–84 (VRHLQRRKGRRRGMGRRKG). The interval 66–85 (VRHLQRRKGRRRGMGRRKGV) is disordered.

This sequence belongs to the eukaryotic ribosomal protein eL19 family. In terms of assembly, part of the 50S ribosomal subunit.

Functionally, binds to the 23S rRNA. The protein is Large ribosomal subunit protein eL19 of Aeropyrum pernix (strain ATCC 700893 / DSM 11879 / JCM 9820 / NBRC 100138 / K1).